Reading from the N-terminus, the 447-residue chain is D-ribitol-5-phosphate cytidylyltransferase (447 aa).

It belongs to the IspD/TarI cytidylyltransferase family. IspD subfamily. Homodimer.

It is found in the cytoplasm. It localises to the cytosol. The enzyme catalyses D-ribitol 5-phosphate + CTP + H(+) = CDP-L-ribitol + diphosphate. It catalyses the reaction D-ribose 5-phosphate + CTP + H(+) = CDP-D-ribose + diphosphate. It carries out the reaction D-ribulose 5-phosphate + CTP + H(+) = CDP-D-ribulose + diphosphate. The protein operates within protein modification; protein glycosylation. In terms of biological role, cytidylyltransferase required for protein O-linked mannosylation. Catalyzes the formation of CDP-ribitol nucleotide sugar from D-ribitol 5-phosphate. CDP-ribitol is a substrate of FKTN during the biosynthesis of the phosphorylated O-mannosyl trisaccharide (N-acetylgalactosamine-beta-3-N-acetylglucosamine-beta-4-(phosphate-6-)mannose), a carbohydrate structure present in alpha-dystroglycan (DAG1), which is required for binding laminin G-like domain-containing extracellular proteins with high affinity. Shows activity toward other pentose phosphate sugars and mediates formation of CDP-ribulose or CDP-ribose using CTP and ribulose-5-phosphate or ribose-5-phosphate, respectively. Not involved in dolichol production. In Mus musculus (Mouse), this protein is D-ribitol-5-phosphate cytidylyltransferase (Crppa).